The chain runs to 245 residues: 1-(5-phosphoribosyl)-5-[(5-phosphoribosylamino)methylideneamino] imidazole-4-carboxamide isomerase (245 aa).

Catalysis depends on D7, which acts as the Proton acceptor. D129 serves as the catalytic Proton donor.

This sequence belongs to the HisA/HisF family.

The protein resides in the cytoplasm. It carries out the reaction 1-(5-phospho-beta-D-ribosyl)-5-[(5-phospho-beta-D-ribosylamino)methylideneamino]imidazole-4-carboxamide = 5-[(5-phospho-1-deoxy-D-ribulos-1-ylimino)methylamino]-1-(5-phospho-beta-D-ribosyl)imidazole-4-carboxamide. The protein operates within amino-acid biosynthesis; L-histidine biosynthesis; L-histidine from 5-phospho-alpha-D-ribose 1-diphosphate: step 4/9. The chain is 1-(5-phosphoribosyl)-5-[(5-phosphoribosylamino)methylideneamino] imidazole-4-carboxamide isomerase from Shewanella loihica (strain ATCC BAA-1088 / PV-4).